A 232-amino-acid chain; its full sequence is 2,3-bisphosphoglycerate-dependent phosphoglycerate mutase (232 aa).

Substrate is bound by residues 10 to 17 (RHGESQWN), 23 to 24 (TG), R62, 89 to 92 (ERHY), K100, 116 to 117 (RR), and 186 to 187 (GN). H11 acts as the Tele-phosphohistidine intermediate in catalysis. Catalysis depends on E89, which acts as the Proton donor/acceptor.

It belongs to the phosphoglycerate mutase family. BPG-dependent PGAM subfamily. In terms of assembly, homodimer.

It catalyses the reaction (2R)-2-phosphoglycerate = (2R)-3-phosphoglycerate. It functions in the pathway carbohydrate degradation; glycolysis; pyruvate from D-glyceraldehyde 3-phosphate: step 3/5. Functionally, catalyzes the interconversion of 2-phosphoglycerate and 3-phosphoglycerate. The protein is 2,3-bisphosphoglycerate-dependent phosphoglycerate mutase of Blochmanniella pennsylvanica (strain BPEN).